Reading from the N-terminus, the 190-residue chain is UPF0301 protein Psyr_0485 (190 aa).

The protein belongs to the UPF0301 (AlgH) family.

The sequence is that of UPF0301 protein Psyr_0485 from Pseudomonas syringae pv. syringae (strain B728a).